Consider the following 547-residue polypeptide: Chaperonin GroEL 3 (547 aa).

ATP is bound by residues 30–33, Lys51, 87–91, Gly415, and Asp496; these read TLGP and DGTTT.

Belongs to the chaperonin (HSP60) family. As to quaternary structure, forms a cylinder of 14 subunits composed of two heptameric rings stacked back-to-back. Interacts with the co-chaperonin GroES.

The protein resides in the cytoplasm. The catalysed reaction is ATP + H2O + a folded polypeptide = ADP + phosphate + an unfolded polypeptide.. In terms of biological role, together with its co-chaperonin GroES, plays an essential role in assisting protein folding. The GroEL-GroES system forms a nano-cage that allows encapsulation of the non-native substrate proteins and provides a physical environment optimized to promote and accelerate protein folding. This Bradyrhizobium sp. (strain ORS 278) protein is Chaperonin GroEL 3.